The chain runs to 161 residues: Nucleotide-binding protein Sfri_0732 (161 aa).

It belongs to the YajQ family.

In terms of biological role, nucleotide-binding protein. The sequence is that of Nucleotide-binding protein Sfri_0732 from Shewanella frigidimarina (strain NCIMB 400).